Consider the following 85-residue polypeptide: Putative plasmid stability protein y4jJ (85 aa).

Basic and acidic residues predominate over residues 66–78; it reads EAEHFNQLRDKTP. The disordered stretch occupies residues 66-85; it reads EAEHFNQLRDKTPAEPMSFE.

This sequence to P.syringae pv tomato plasmid stability protein StbC.

Its function is as follows. Involved in plasmid stability. The sequence is that of Putative plasmid stability protein y4jJ from Sinorhizobium fredii (strain NBRC 101917 / NGR234).